We begin with the raw amino-acid sequence, 180 residues long: Large ribosomal subunit protein uL6 (180 aa).

It belongs to the universal ribosomal protein uL6 family. As to quaternary structure, part of the 50S ribosomal subunit.

Its function is as follows. This protein binds to the 23S rRNA, and is important in its secondary structure. It is located near the subunit interface in the base of the L7/L12 stalk, and near the tRNA binding site of the peptidyltransferase center. This chain is Large ribosomal subunit protein uL6, found in Desulforapulum autotrophicum (strain ATCC 43914 / DSM 3382 / VKM B-1955 / HRM2) (Desulfobacterium autotrophicum).